A 72-amino-acid polypeptide reads, in one-letter code: Heat-stable enterotoxin A2 (72 aa).

An N-terminal signal peptide occupies residues 1–19; sequence MKKSILFIFLSVLSFSPFA. A propeptide spanning residues 20–53 is cleaved from the precursor; that stretch reads QDAKPAGSSKEKITLESKKCNIVKKNNESSPESM. Disulfide bonds link Cys59-Cys64, Cys60-Cys68, and Cys63-Cys71.

Belongs to the heat-stable enterotoxin family.

The protein resides in the secreted. In terms of biological role, toxin which activates the particulate form of guanylate cyclase and increases cyclic GMP levels within the host intestinal epithelial cells. This chain is Heat-stable enterotoxin A2 (sta2), found in Escherichia coli.